Here is a 603-residue protein sequence, read N- to C-terminus: MPVRQLPEQVVNRIAAGEVVERPASVVKELVENAIDAGASRIDVFTDGGGRRRIGITDDGSGMTAKDLALAVERHATSKLDDEDLLQIRTLGFRGEALPSIGSVARLSITTRHAGEPHAWALTVEGGEKSEIMPAALAHGTRVEVNDLFYATPARLKFLKTDRTEAEAIREVVRRLAMARPDVAFTLAGEERAPVTWAAALPGAAGRLTRLGDILGAEFRSHAIEVHAEREGIVVSGYAAAPALTKANALGQYLFVNGRPVRDKLILGAVRAAYSDYLPRDRHPVLALFVTLDPREVDANVHPAKTEVRFRNAGLVRALIVHGLKEALAREGRRTAANSGESALSSFRPAFTPRPASWDWRASPSAPVAPMPSFDGAAAPAFTERAQAAFDVGAPSADVRFETQPVSDLVDRPLGAARTQIHETYIVSQTRDGLIIVDQHAAHERIVYEGLKASLAANGVQRQILLIPEIVEMDEATVERLLERSDELASFGLAIESFGPGAVAVRETPSLLGKTNAGGLLRDLSEHMAEWDEALPLERRLMHVAATMACHGSVRAGRRLRPEEMNALLREMEETPNSGQCNHGRPTYVELKLSDVEKLFGRR.

It belongs to the DNA mismatch repair MutL/HexB family.

In terms of biological role, this protein is involved in the repair of mismatches in DNA. It is required for dam-dependent methyl-directed DNA mismatch repair. May act as a 'molecular matchmaker', a protein that promotes the formation of a stable complex between two or more DNA-binding proteins in an ATP-dependent manner without itself being part of a final effector complex. In Bradyrhizobium diazoefficiens (strain JCM 10833 / BCRC 13528 / IAM 13628 / NBRC 14792 / USDA 110), this protein is DNA mismatch repair protein MutL.